The primary structure comprises 386 residues: Sphingosine 1-phosphate receptor 4 (386 aa).

Residues 1–56 (MNISTWSTLVTPESCHRLAASGHSLLIVLHYNHSGRLASRGGSEDGGGLGMLRGPS) lie on the Extracellular side of the membrane. N-linked (GlcNAc...) asparagine glycosylation is found at asparagine 2 and asparagine 32. The chain crosses the membrane as a helical span at residues 57 to 77 (VAAGCLVVLENAMVLAAIAIY). The Cytoplasmic portion of the chain corresponds to 78–87 (MRSRRWVYYC). The helical transmembrane segment at 88-108 (LLNITLSDLLTGLAYVVNVLL) threads the bilayer. At 109 to 120 (SGTRTFQLSPVH) the chain is on the extracellular side. Residues 121–141 (WFLREGLLFMALAASTFSLLF) form a helical membrane-spanning segment. Residues 142 to 163 (TAGERFATMVRVAESGATKTSR) lie on the Cytoplasmic side of the membrane. A helical membrane pass occupies residues 164 to 184 (VYGCIGLCWLLAAILGLLPLL). At 185–208 (GWNCVCAFPRCSSLLPLYSKGYVL) the chain is on the extracellular side. Residues 209-229 (FCVVVFALILVAILSLYGAIF) traverse the membrane as a helical segment. At 230-254 (RVVRANGQKSPRPPARRKSRRLLNT) the chain is on the cytoplasmic side. A helical transmembrane segment spans residues 255 to 275 (VLMILVAFVVCWGPLFGLLLA). The Extracellular portion of the chain corresponds to 276–290 (DIFGSNVWAQEYLRG). The chain crosses the membrane as a helical span at residues 291–311 (MDWILALAVFNSAINPLIYSF). Residues 312–386 (RSREVQRAVL…LSSISSVRST (75 aa)) are Cytoplasmic-facing. Cysteine 325 carries S-palmitoyl cysteine lipidation.

It belongs to the G-protein coupled receptor 1 family. As to expression, specifically expressed in fetal and adult lymphoid and hematopoietic tissue. Expressed in lung, spleen, thymus and lymph node but absent in other non-lymphatic tissue. Coexpressed with GNA15 at the same relative levels in all tissues examined, with the highest levels in adult spleen and lung.

Its subcellular location is the cell membrane. Receptor for the lysosphingolipid sphingosine 1-phosphate (S1P). S1P is a bioactive lysophospholipid that elicits diverse physiological effect on most types of cells and tissues. May be involved in cell migration processes that are specific for lymphocytes. This is Sphingosine 1-phosphate receptor 4 (S1pr4) from Mus musculus (Mouse).